Here is a 292-residue protein sequence, read N- to C-terminus: 4-amino-L-phenylalanine/4-methylamino-L-phenylalanine methyltransferase (292 aa).

Cys128–Gly132 lines the S-adenosyl-L-methionine pocket.

It belongs to the protein N5-glutamine methyltransferase family.

The enzyme catalyses 4-amino-L-phenylalanine + S-adenosyl-L-methionine = 4-methylamino-L-phenylalanine + S-adenosyl-L-homocysteine + H(+). It carries out the reaction 4-methylamino-L-phenylalanine + S-adenosyl-L-methionine = 4-dimethylamino-L-phenylalanine + S-adenosyl-L-homocysteine + H(+). The protein operates within antibiotic biosynthesis. Functionally, involved in pristinamycin I biosynthesis. Catalyzes the SAM-dependent methylation of 4-amino-L-phenylalanine (PAPA) to 4-methylamino-L-phenylalanine (MMPAPA), and of MMPAPA to 4-dimethylamino-L-phenylalanine (DMPAPA). The chain is 4-amino-L-phenylalanine/4-methylamino-L-phenylalanine methyltransferase from Streptomyces pristinaespiralis.